The following is a 454-amino-acid chain: Phosphoglucosamine mutase (454 aa).

The active-site Phosphoserine intermediate is Ser102. Mg(2+) is bound by residues Ser102, Asp247, Asp249, and Asp251. Ser102 is subject to Phosphoserine.

It belongs to the phosphohexose mutase family. It depends on Mg(2+) as a cofactor. In terms of processing, activated by phosphorylation.

The catalysed reaction is alpha-D-glucosamine 1-phosphate = D-glucosamine 6-phosphate. In terms of biological role, catalyzes the conversion of glucosamine-6-phosphate to glucosamine-1-phosphate. This Kineococcus radiotolerans (strain ATCC BAA-149 / DSM 14245 / SRS30216) protein is Phosphoglucosamine mutase.